Reading from the N-terminus, the 209-residue chain is Imidazole glycerol phosphate synthase subunit HisH (209 aa).

Positions 1–205 (MIAIIDYGMG…KGVVETWKSS (205 aa)) constitute a Glutamine amidotransferase type-1 domain. Catalysis depends on Cys79, which acts as the Nucleophile. Residues His180 and Glu182 contribute to the active site.

Heterodimer of HisH and HisF.

It localises to the cytoplasm. The enzyme catalyses 5-[(5-phospho-1-deoxy-D-ribulos-1-ylimino)methylamino]-1-(5-phospho-beta-D-ribosyl)imidazole-4-carboxamide + L-glutamine = D-erythro-1-(imidazol-4-yl)glycerol 3-phosphate + 5-amino-1-(5-phospho-beta-D-ribosyl)imidazole-4-carboxamide + L-glutamate + H(+). It catalyses the reaction L-glutamine + H2O = L-glutamate + NH4(+). It functions in the pathway amino-acid biosynthesis; L-histidine biosynthesis; L-histidine from 5-phospho-alpha-D-ribose 1-diphosphate: step 5/9. Its function is as follows. IGPS catalyzes the conversion of PRFAR and glutamine to IGP, AICAR and glutamate. The HisH subunit catalyzes the hydrolysis of glutamine to glutamate and ammonia as part of the synthesis of IGP and AICAR. The resulting ammonia molecule is channeled to the active site of HisF. In Bacillus thuringiensis subsp. konkukian (strain 97-27), this protein is Imidazole glycerol phosphate synthase subunit HisH.